Here is a 250-residue protein sequence, read N- to C-terminus: tRNA (guanine-N(1)-)-methyltransferase (250 aa).

S-adenosyl-L-methionine is bound by residues Gly115 and 135–140 (LGDFVL).

This sequence belongs to the RNA methyltransferase TrmD family. Homodimer.

It localises to the cytoplasm. It catalyses the reaction guanosine(37) in tRNA + S-adenosyl-L-methionine = N(1)-methylguanosine(37) in tRNA + S-adenosyl-L-homocysteine + H(+). Its function is as follows. Specifically methylates guanosine-37 in various tRNAs. The protein is tRNA (guanine-N(1)-)-methyltransferase of Legionella pneumophila subsp. pneumophila (strain Philadelphia 1 / ATCC 33152 / DSM 7513).